The sequence spans 365 residues: Peptide chain release factor 2 (365 aa).

Glutamine 252 bears the N5-methylglutamine mark.

Belongs to the prokaryotic/mitochondrial release factor family. Post-translationally, methylated by PrmC. Methylation increases the termination efficiency of RF2.

It localises to the cytoplasm. Its function is as follows. Peptide chain release factor 2 directs the termination of translation in response to the peptide chain termination codons UGA and UAA. The polypeptide is Peptide chain release factor 2 (Pectobacterium atrosepticum (strain SCRI 1043 / ATCC BAA-672) (Erwinia carotovora subsp. atroseptica)).